The following is a 432-amino-acid chain: DnaJ-like protein 1 (432 aa).

A J domain is found at 4 to 73; the sequence is DTEYYDLLGV…RAKYDKYGRK (70 aa). Positions 117 to 187 are disordered; that stretch reads NAEDEAEKEK…KKNEQVGAEA (71 aa).

This sequence belongs to the DnaJ family. In terms of assembly, interacts with SLN1.

Its subcellular location is the cytoplasm. Functionally, required for peroxisomal protein import which maintains the function of peroxisomes. The sequence is that of DnaJ-like protein 1 (DJP1) from Saccharomyces cerevisiae (strain ATCC 204508 / S288c) (Baker's yeast).